Reading from the N-terminus, the 302-residue chain is Giardin subunit alpha-5 (302 aa).

Annexin repeat units lie at residues 1–72 (MTST…VNMW), 74–144 (SRHE…VAGW), 153–226 (GSVE…AAHF), and 230–298 (GLPV…TLWR).

Belongs to the annexin family. Giardin subunit alpha subfamily.

It is found in the cytoplasm. The protein localises to the cytoskeleton. Giardins are involved in parasite attachment to the intestinal mucosa and in the cytoskeletal disassembly and reassembly that marks the transition from infectious trophozoite to transmissible cyst. They may interact with other cytoskeletal proteins such as microtubules in the microribbons or crossbridges, to maintain the integrity of the ventral disk. The protein is Giardin subunit alpha-5 of Giardia intestinalis (Giardia lamblia).